Reading from the N-terminus, the 190-residue chain is Protein FAM210B, mitochondrial (190 aa).

The transit peptide at 1–58 (MAGLLTLLGPAGRVSTRLRPLAPWLLGTATSCAPPLWALALSHPVPDARLLRTARGDC) directs the protein to the mitochondrion. The span at 56-66 (GDCLSRQEPNR) shows a compositional bias: basic and acidic residues. Positions 56-81 (GDCLSRQEPNRTPEPGGSVTGTEKKL) are disordered. The DUF1279 domain occupies 78-189 (EKKLSRTQQL…VGLFKPPATK (112 aa)). The next 2 helical transmembrane spans lie at 97–117 (VGVS…YTVV) and 148–168 (FVVA…ITLV).

This sequence belongs to the FAM210 family. Expressed in late erythroblast differentiation stages.

Its subcellular location is the mitochondrion. The protein resides in the mitochondrion outer membrane. In terms of biological role, plays a role in erythroid differentiation. Involved in cell proliferation and tumor cell growth suppression. Involved in the metabolic reprogramming of cancer cells in a PDK4-dependent manner. In Mus musculus (Mouse), this protein is Protein FAM210B, mitochondrial.